The sequence spans 281 residues: Trypsin zeta (281 aa).

Positions 1–23 (MSSSSWLGCLLAVLLSALALSQG) are cleaved as a signal peptide. The propeptide at 24–39 (LPLLEDLDENSFPDGR) is activation peptide. One can recognise a Peptidase S1 domain in the interval 40 to 279 (IVGGYVTDIA…LRPWIDAVRA (240 aa)). An intrachain disulfide couples Cys-73 to Cys-89. Residues His-88 and Asp-135 each act as charge relay system in the active site. 2 cysteine pairs are disulfide-bonded: Cys-199–Cys-219 and Cys-231–Cys-255. Residue Ser-235 is the Charge relay system of the active site.

Belongs to the peptidase S1 family.

Its subcellular location is the secreted. The protein resides in the extracellular space. The catalysed reaction is Preferential cleavage: Arg-|-Xaa, Lys-|-Xaa.. This chain is Trypsin zeta (zetaTry), found in Drosophila erecta (Fruit fly).